Here is a 152-residue protein sequence, read N- to C-terminus: UPF0225 protein YchJ (152 aa).

This sequence belongs to the UPF0225 family.

This chain is UPF0225 protein YchJ, found in Escherichia coli O7:K1 (strain IAI39 / ExPEC).